The chain runs to 131 residues: Cuticle protein 79, isoform B (131 aa).

Tandem repeats lie at residues 37–40, 45–48, and 53–56.

Functionally, component of the cuticle of migratory locust which contains more than 100 different structural proteins. This Locusta migratoria (Migratory locust) protein is Cuticle protein 79, isoform B.